The following is a 237-amino-acid chain: Lysophospholipase-like protein 1 (237 aa).

N-acetylalanine is present on Ala-2. Active-site charge relay system residues include Ser-124, Asp-179, and His-211.

It belongs to the AB hydrolase superfamily. AB hydrolase 2 family.

The protein resides in the cytoplasm. The protein localises to the cytosol. It catalyses the reaction S-hexadecanoyl-L-cysteinyl-[protein] + H2O = L-cysteinyl-[protein] + hexadecanoate + H(+). Functionally, palmitoyl thioesterase that catalyzes depalmitoylation of CGAS and KCNMA1. Acts as a regulator of innate immunity by mediating depalmitoylation of CGAS, thereby preventing CGAS homodimerization and cyclic GMP-AMP synthase activity. Does not exhibit phospholipase nor triacylglycerol lipase activity, able to hydrolyze only short chain substrates due to its shallow active site. The protein is Lysophospholipase-like protein 1 of Pongo abelii (Sumatran orangutan).